A 194-amino-acid chain; its full sequence is Holliday junction branch migration complex subunit RuvA (194 aa).

The domain I stretch occupies residues 1-64 (MIARLSGILV…EDAQLLYGFG (64 aa)). Residues 65-141 (SDQERATFRQ…FAIDGGTALA (77 aa)) are domain II. The flexible linker stretch occupies residues 141-144 (AGSN). A domain III region spans residues 145–194 (PAKSASSDVLNALLALGYNEREALAAVKQLPADIAVAEGIKLSLKSLSKT).

This sequence belongs to the RuvA family. Homotetramer. Forms an RuvA(8)-RuvB(12)-Holliday junction (HJ) complex. HJ DNA is sandwiched between 2 RuvA tetramers; dsDNA enters through RuvA and exits via RuvB. An RuvB hexamer assembles on each DNA strand where it exits the tetramer. Each RuvB hexamer is contacted by two RuvA subunits (via domain III) on 2 adjacent RuvB subunits; this complex drives branch migration. In the full resolvosome a probable DNA-RuvA(4)-RuvB(12)-RuvC(2) complex forms which resolves the HJ.

The protein resides in the cytoplasm. In terms of biological role, the RuvA-RuvB-RuvC complex processes Holliday junction (HJ) DNA during genetic recombination and DNA repair, while the RuvA-RuvB complex plays an important role in the rescue of blocked DNA replication forks via replication fork reversal (RFR). RuvA specifically binds to HJ cruciform DNA, conferring on it an open structure. The RuvB hexamer acts as an ATP-dependent pump, pulling dsDNA into and through the RuvAB complex. HJ branch migration allows RuvC to scan DNA until it finds its consensus sequence, where it cleaves and resolves the cruciform DNA. The protein is Holliday junction branch migration complex subunit RuvA of Methylobacillus flagellatus (strain ATCC 51484 / DSM 6875 / VKM B-1610 / KT).